The primary structure comprises 62 residues: uncharacterized protein (62 aa).

A signal peptide spans 1–19 (MKLIILLFVVAAFVTLAMG).

This is an uncharacterized protein from Lepidoptera (butterflies and moths).